A 254-amino-acid chain; its full sequence is Kallikrein-4 (254 aa).

A signal peptide spans 1–26 (MATAGNPWGWFLGYLILGVAGSLVSG). The propeptide occupies 27–30 (SCSQ). Residues 31–252 (IINGEDCSPH…FTEWIEKTVQ (222 aa)) form the Peptidase S1 domain. Intrachain disulfides connect C37-C167, C56-C72, C141-C241, C148-C213, C178-C192, and C203-C228. Residue H40 participates in Zn(2+) binding. H71 acts as the Charge relay system in catalysis. Residue E91 participates in Zn(2+) binding. Residue D116 is the Charge relay system of the active site. N-linked (GlcNAc...) asparagine glycosylation is present at N169. Catalysis depends on S207, which acts as the Charge relay system.

It belongs to the peptidase S1 family. Kallikrein subfamily. In terms of processing, N-glycosylated. The N-glycan structures are of complex diantennary or triantennary type, which may be further modified with up to 2 sialic acid residues. In terms of tissue distribution, expressed in prostate.

The protein resides in the secreted. Its function is as follows. Has a major role in enamel formation. Required during the maturation stage of tooth development for clearance of enamel proteins and normal structural patterning of the crystalline matrix. This chain is Kallikrein-4 (KLK4), found in Homo sapiens (Human).